Consider the following 105-residue polypeptide: Met repressor (105 aa).

This sequence belongs to the MetJ family. Homodimer.

Its subcellular location is the cytoplasm. Its function is as follows. This regulatory protein, when combined with SAM (S-adenosylmethionine) represses the expression of the methionine regulon and of enzymes involved in SAM synthesis. This is Met repressor from Hamiltonella defensa subsp. Acyrthosiphon pisum (strain 5AT).